Here is a 439-residue protein sequence, read N- to C-terminus: tRNA-2-methylthio-N(6)-dimethylallyladenosine synthase (439 aa).

In terms of domain architecture, MTTase N-terminal spans 2-119 (KKLYLKTHGC…LPDLLDSVIQ (118 aa)). [4Fe-4S] cluster-binding residues include Cys-11, Cys-48, Cys-82, Cys-156, Cys-160, and Cys-163. Residues 142-374 (RAEGPSAFVS…QNRINAKAAE (233 aa)) form the Radical SAM core domain. One can recognise a TRAM domain in the interval 377-439 (QSMVGTQQRI…RPYSLWGEIC (63 aa)).

It belongs to the methylthiotransferase family. MiaB subfamily. In terms of assembly, monomer. The cofactor is [4Fe-4S] cluster.

It is found in the cytoplasm. The catalysed reaction is N(6)-dimethylallyladenosine(37) in tRNA + (sulfur carrier)-SH + AH2 + 2 S-adenosyl-L-methionine = 2-methylsulfanyl-N(6)-dimethylallyladenosine(37) in tRNA + (sulfur carrier)-H + 5'-deoxyadenosine + L-methionine + A + S-adenosyl-L-homocysteine + 2 H(+). Its function is as follows. Catalyzes the methylthiolation of N6-(dimethylallyl)adenosine (i(6)A), leading to the formation of 2-methylthio-N6-(dimethylallyl)adenosine (ms(2)i(6)A) at position 37 in tRNAs that read codons beginning with uridine. The polypeptide is tRNA-2-methylthio-N(6)-dimethylallyladenosine synthase (Coxiella burnetii (strain CbuK_Q154) (Coxiella burnetii (strain Q154))).